The chain runs to 164 residues: Probable ubiquitin-conjugating enzyme E2 7 (164 aa).

The UBC core domain maps to 3-163 (QSSLLLKKQL…VAQCVRRSQE (161 aa)). Residue cysteine 88 is the Glycyl thioester intermediate of the active site.

The protein belongs to the ubiquitin-conjugating enzyme family.

It catalyses the reaction S-ubiquitinyl-[E1 ubiquitin-activating enzyme]-L-cysteine + [E2 ubiquitin-conjugating enzyme]-L-cysteine = [E1 ubiquitin-activating enzyme]-L-cysteine + S-ubiquitinyl-[E2 ubiquitin-conjugating enzyme]-L-cysteine.. The protein operates within protein modification; protein ubiquitination. Its function is as follows. Catalyzes the covalent attachment of ubiquitin to other proteins. The protein is Probable ubiquitin-conjugating enzyme E2 7 (ubc-7) of Caenorhabditis elegans.